The primary structure comprises 492 residues: Stromelysin-3 (492 aa).

Positions 1 to 35 (MARAACLLRAISRVLLLPLPLLLLLLLLLPSPLMA) are cleaved as a signal peptide. Residues 36–101 (RARPPESHRH…VLNARNRQKR (66 aa)) constitute a propeptide, activation peptide. The Cysteine switch signature appears at 82–89 (LRCGVPDL). Positions 84, 168, and 170 each coordinate Zn(2+). Ca(2+) is bound by residues Asp175, Gly176, Gly178, and Ile180. Zn(2+) is bound by residues His183, His196, and His219. The active site involves Glu220. Zn(2+)-binding residues include His223 and His229. 4 Hemopexin repeats span residues 295-343 (PDVC…WQGL), 344-386 (PSPV…KLGL), 388-436 (GSPV…WRGV), and 437-484 (PSEI…FFDC). Cys298 and Cys484 form a disulfide bridge.

The protein belongs to the peptidase M10A family. Requires Ca(2+) as cofactor. The cofactor is Zn(2+). The precursor is cleaved by a furin endopeptidase. In terms of tissue distribution, specifically expressed in the mammary gland during apoptosis.

The protein localises to the secreted. It is found in the extracellular space. It localises to the extracellular matrix. Its function is as follows. May play an important role in the progression of epithelial malignancies. In Mus musculus (Mouse), this protein is Stromelysin-3 (Mmp11).